The chain runs to 338 residues: Putative ankyrin repeat protein CBU_0781 (338 aa).

Positions 1–31 (MSRRETPTSTISSTPTGTRTPRRRLSRKGHP) are disordered. Low complexity predominate over residues 7–19 (PTSTISSTPTGTR). Over residues 20-31 (TPRRRLSRKGHP) the composition is skewed to basic residues. 2 ANK repeats span residues 92–124 (QGDT…IVNK) and 125–157 (LGET…IKYK). A coiled-coil region spans residues 197–242 (SQIMASDKEIDEIIRNARNLQIIKKEKREAEERARTKKSKQITLQR). Residues 319–338 (KKEDTTLSRNNSLSCLSSPR) are disordered. A compositionally biased stretch (low complexity) spans 325 to 338 (LSRNNSLSCLSSPR).

The protein is Putative ankyrin repeat protein CBU_0781 of Coxiella burnetii (strain RSA 493 / Nine Mile phase I).